The following is a 260-amino-acid chain: Acetyl-coenzyme A carboxylase carboxyl transferase subunit alpha (260 aa).

The region spanning 1 to 235 (MSAYDKVMAA…SNKILHSINK (235 aa)) is the CoA carboxyltransferase C-terminal domain.

This sequence belongs to the AccA family. As to quaternary structure, acetyl-CoA carboxylase is a heterohexamer composed of biotin carboxyl carrier protein (AccB), biotin carboxylase (AccC) and two subunits each of ACCase subunit alpha (AccA) and ACCase subunit beta (AccD).

Its subcellular location is the cytoplasm. The enzyme catalyses N(6)-carboxybiotinyl-L-lysyl-[protein] + acetyl-CoA = N(6)-biotinyl-L-lysyl-[protein] + malonyl-CoA. Its pathway is lipid metabolism; malonyl-CoA biosynthesis; malonyl-CoA from acetyl-CoA: step 1/1. Component of the acetyl coenzyme A carboxylase (ACC) complex. First, biotin carboxylase catalyzes the carboxylation of biotin on its carrier protein (BCCP) and then the CO(2) group is transferred by the carboxyltransferase to acetyl-CoA to form malonyl-CoA. This is Acetyl-coenzyme A carboxylase carboxyl transferase subunit alpha from Ruminiclostridium cellulolyticum (strain ATCC 35319 / DSM 5812 / JCM 6584 / H10) (Clostridium cellulolyticum).